The following is a 624-amino-acid chain: (-)-beta-phellandrene synthase 2, chloroplastic (624 aa).

Residues 1-48 (MAIVSSVPLASKSCLHKSLISSIHKLKPFCRTIPTLGMSRPGKYVMPS) constitute a chloroplast transit peptide. 3 residues coordinate Mg(2+): aspartate 375, aspartate 379, and aspartate 527. Residues 375-379 (DDMYD) carry the DDXXD motif motif.

Belongs to the terpene synthase family. Tpsd subfamily. Mg(2+) serves as cofactor. The cofactor is Mn(2+).

The protein resides in the plastid. The protein localises to the chloroplast. It catalyses the reaction (2E)-geranyl diphosphate = (-)-beta-phellandrene + diphosphate. The protein operates within terpene metabolism; oleoresin biosynthesis. Its function is as follows. Terpene synthase (TPS) involved in the biosynthesis of monoterpene natural products included in conifer oleoresin secretions and volatile emissions; these compounds contribute to biotic and abiotic stress defense against herbivores and pathogens. Catalyzes the conversion of (2E)-geranyl diphosphate (GPP) to (-)-beta-phellandrene. This is (-)-beta-phellandrene synthase 2, chloroplastic from Picea sitchensis (Sitka spruce).